We begin with the raw amino-acid sequence, 426 residues long: Glutamate-1-semialdehyde 2,1-aminomutase 2 (426 aa).

Lys-265 is subject to N6-(pyridoxal phosphate)lysine.

Belongs to the class-III pyridoxal-phosphate-dependent aminotransferase family. HemL subfamily. In terms of assembly, homodimer. Pyridoxal 5'-phosphate is required as a cofactor.

Its subcellular location is the cytoplasm. The catalysed reaction is (S)-4-amino-5-oxopentanoate = 5-aminolevulinate. The protein operates within porphyrin-containing compound metabolism; protoporphyrin-IX biosynthesis; 5-aminolevulinate from L-glutamyl-tRNA(Glu): step 2/2. This chain is Glutamate-1-semialdehyde 2,1-aminomutase 2, found in Lachnoclostridium phytofermentans (strain ATCC 700394 / DSM 18823 / ISDg) (Clostridium phytofermentans).